Reading from the N-terminus, the 329-residue chain is Cytochrome f (329 aa).

The signal sequence occupies residues 1 to 44 (MKRNIIFLVIHQFENLTMKKKQNIFFIFLLTVFFNFTVNSNVSA). Residues tyrosine 45, cysteine 65, cysteine 68, and histidine 69 each coordinate heme. A helical transmembrane segment spans residues 295–315 (VQGLIIFLITIFITQLFLVLK).

The protein belongs to the cytochrome f family. The 4 large subunits of the cytochrome b6-f complex are cytochrome b6, subunit IV (17 kDa polypeptide, petD), cytochrome f and the Rieske protein, while the 4 small subunits are PetG, PetL, PetM and PetN. The complex functions as a dimer. Heme is required as a cofactor.

Its subcellular location is the plastid. It localises to the chloroplast thylakoid membrane. Component of the cytochrome b6-f complex, which mediates electron transfer between photosystem II (PSII) and photosystem I (PSI), cyclic electron flow around PSI, and state transitions. The sequence is that of Cytochrome f from Tupiella akineta (Green alga).